Consider the following 120-residue polypeptide: Large ribosomal subunit protein uL18 (120 aa).

Belongs to the universal ribosomal protein uL18 family. In terms of assembly, part of the 50S ribosomal subunit; part of the 5S rRNA/L5/L18/L25 subcomplex. Contacts the 5S and 23S rRNAs.

Its function is as follows. This is one of the proteins that bind and probably mediate the attachment of the 5S RNA into the large ribosomal subunit, where it forms part of the central protuberance. The protein is Large ribosomal subunit protein uL18 of Bacillus licheniformis (strain ATCC 14580 / DSM 13 / JCM 2505 / CCUG 7422 / NBRC 12200 / NCIMB 9375 / NCTC 10341 / NRRL NRS-1264 / Gibson 46).